A 287-amino-acid chain; its full sequence is Acetylglutamate kinase (287 aa).

Residues 70 to 71, Arg92, and Asn184 contribute to the substrate site; that span reads GG.

Belongs to the acetylglutamate kinase family. ArgB subfamily.

The protein localises to the cytoplasm. It catalyses the reaction N-acetyl-L-glutamate + ATP = N-acetyl-L-glutamyl 5-phosphate + ADP. It participates in amino-acid biosynthesis; L-arginine biosynthesis; N(2)-acetyl-L-ornithine from L-glutamate: step 2/4. Catalyzes the ATP-dependent phosphorylation of N-acetyl-L-glutamate. The chain is Acetylglutamate kinase from Ruegeria pomeroyi (strain ATCC 700808 / DSM 15171 / DSS-3) (Silicibacter pomeroyi).